The primary structure comprises 467 residues: F-box protein pof9 (467 aa).

An F-box domain is found at 3 to 49; sequence KSPFLELSYDILLEISTYLDYKDIVHLSETCKSLSYVFDDKTIWHRF. RCC1 repeat units follow at residues 77 to 131, 302 to 354, and 355 to 417; these read RGYA…LLNE, ETFT…YLTS, and DHSI…AAGG.

Interacts with skp1.

It is found in the cytoplasm. Its subcellular location is the nucleus. This Schizosaccharomyces pombe (strain 972 / ATCC 24843) (Fission yeast) protein is F-box protein pof9 (pof9).